Reading from the N-terminus, the 413-residue chain is 26S proteasome regulatory subunit 6B homolog (413 aa).

Positions 1-30 (MATAMVLDPKPAEKLPATRPETSITDVPSD) are disordered. Positions 32-80 (EDDLYARLKSLQRQLEFIEIQEEYVKDELKNLRREHLRAQEEVKRIQSV) form a coiled coil. 201 to 208 (GPPGTGKT) provides a ligand contact to ATP.

Belongs to the AAA ATPase family.

It localises to the cytoplasm. The protein localises to the nucleus. In terms of biological role, the 26S proteasome is involved in the ATP-dependent degradation of ubiquitinated proteins. The regulatory (or ATPase) complex confers ATP dependency and substrate specificity to the 26S complex. The sequence is that of 26S proteasome regulatory subunit 6B homolog from Solanum tuberosum (Potato).